The chain runs to 155 residues: MKLQLVAVGTKMPDWVQTGYTEYLRRFPKDMPFELIEIPAGKRGKNADIKRILDKEGEQMLAAAGKNRIVTLNIPGKPWDTPQLANELERWKQDGRDVSLLIGGPEGLSPACKAAAEQSWSLSALTLPHPLVRVLVAESLYRAWSITTNHPYHRE.

S-adenosyl-L-methionine contacts are provided by residues leucine 72, glycine 103, and 122 to 127 (LSALTL).

This sequence belongs to the RNA methyltransferase RlmH family. Homodimer.

The protein resides in the cytoplasm. It catalyses the reaction pseudouridine(1915) in 23S rRNA + S-adenosyl-L-methionine = N(3)-methylpseudouridine(1915) in 23S rRNA + S-adenosyl-L-homocysteine + H(+). In terms of biological role, specifically methylates the pseudouridine at position 1915 (m3Psi1915) in 23S rRNA. The polypeptide is Ribosomal RNA large subunit methyltransferase H (Salmonella choleraesuis (strain SC-B67)).